We begin with the raw amino-acid sequence, 414 residues long: Relaxin-3 receptor 2 (414 aa).

The Extracellular portion of the chain corresponds to 1 to 43; sequence MATSNSSASLPTLFWVNGSGDSVLSTDGAAMPVQFLVLRIMVA. N-linked (GlcNAc...) asparagine glycosylation is found at Asn5 and Asn17. A helical membrane pass occupies residues 44 to 64; the sequence is LAYGLVGIIGLLGNLAVLWVL. At 65–77 the chain is on the cytoplasmic side; the sequence is GNCGQRVPGLSSD. A helical transmembrane segment spans residues 78-98; that stretch reads TFVFSLALADLGLALTLPFWA. The Extracellular segment spans residues 99 to 116; sequence TESAMDFHWPFGSALCKV. A disulfide bridge connects residues Cys114 and Cys191. The chain crosses the membrane as a helical span at residues 117–137; that stretch reads VLTTTVLSIYASTFLITALSI. At 138–155 the chain is on the cytoplasmic side; sequence ARYWVVAMAVGPGSHLSV. Residues 156-176 traverse the membrane as a helical segment; that stretch reads FWARVVTLAVWVAAALVTVPT. Residues 177–209 lie on the Extracellular side of the membrane; sequence AIFGAEVELWGVCLCLLRFPSRYWLGAYQLQRV. Residues 210-230 form a helical membrane-spanning segment; that stretch reads VLAFIVPLGVITTSYLLLLAF. At 231-255 the chain is on the cytoplasmic side; it reads LERQQRCRPRQWQDSRVVARSVRVL. Residues 256–276 form a helical membrane-spanning segment; it reads VASFALCWVPNHVVTLWEILV. Topologically, residues 277–293 are extracellular; the sequence is RFDLVPWDSTFYTFHTY. A helical transmembrane segment spans residues 294–316; it reads ILPITTCLAHSNSCLNPVIYCLL. At 317–414 the chain is on the cytoplasmic side; it reads RREPQQVLVS…SQAAVSPGEV (98 aa).

The protein belongs to the G-protein coupled receptor 1 family. As to expression, detected only in bone marrow.

It localises to the cell membrane. Its function is as follows. High affinity receptor for INSL5. Also acts as a receptor for RLN3/relaxin-3, as well as bradykinin and kallidin. Binding of the ligand inhibit cAMP accumulation. The polypeptide is Relaxin-3 receptor 2 (Rxfp4) (Mus musculus (Mouse)).